A 358-amino-acid polypeptide reads, in one-letter code: 4-diphosphocytidyl-2-C-methyl-D-erythritol kinase (358 aa).

Lys-24 is an active-site residue. 138–148 (PVAGGMAGGSA) is a binding site for ATP. Asp-186 is a catalytic residue.

This sequence belongs to the GHMP kinase family. IspE subfamily.

The enzyme catalyses 4-CDP-2-C-methyl-D-erythritol + ATP = 4-CDP-2-C-methyl-D-erythritol 2-phosphate + ADP + H(+). The protein operates within isoprenoid biosynthesis; isopentenyl diphosphate biosynthesis via DXP pathway; isopentenyl diphosphate from 1-deoxy-D-xylulose 5-phosphate: step 3/6. Catalyzes the phosphorylation of the position 2 hydroxy group of 4-diphosphocytidyl-2C-methyl-D-erythritol. The chain is 4-diphosphocytidyl-2-C-methyl-D-erythritol kinase from Corynebacterium jeikeium (strain K411).